The primary structure comprises 145 residues: MKFFCKLESGSSLPEYATSGASGADVRANINEPIAILPGQRALIPTGISVEIPHGYEIQVRSRSGLASKYGVIVLQSPGTVDADYRGEIRVILANLGEATFIVEPGMRIAQLVVAKVEQVSFVETQEELTATARGTGGFGHTGEC.

Substrate is bound by residues 63-65, Q76, and 80-82; these read RSG and TVD.

This sequence belongs to the dUTPase family. Requires Mg(2+) as cofactor.

It catalyses the reaction dUTP + H2O = dUMP + diphosphate + H(+). Its pathway is pyrimidine metabolism; dUMP biosynthesis; dUMP from dCTP (dUTP route): step 2/2. Functionally, this enzyme is involved in nucleotide metabolism: it produces dUMP, the immediate precursor of thymidine nucleotides and it decreases the intracellular concentration of dUTP so that uracil cannot be incorporated into DNA. The chain is Deoxyuridine 5'-triphosphate nucleotidohydrolase from Chlamydia trachomatis serovar L2 (strain ATCC VR-902B / DSM 19102 / 434/Bu).